A 573-amino-acid chain; its full sequence is 2-succinyl-5-enolpyruvyl-6-hydroxy-3-cyclohexene-1-carboxylate synthase (573 aa).

Belongs to the TPP enzyme family. MenD subfamily. As to quaternary structure, homodimer. Requires Mg(2+) as cofactor. The cofactor is Mn(2+). It depends on thiamine diphosphate as a cofactor.

The catalysed reaction is isochorismate + 2-oxoglutarate + H(+) = 5-enolpyruvoyl-6-hydroxy-2-succinyl-cyclohex-3-ene-1-carboxylate + CO2. It functions in the pathway quinol/quinone metabolism; 1,4-dihydroxy-2-naphthoate biosynthesis; 1,4-dihydroxy-2-naphthoate from chorismate: step 2/7. It participates in quinol/quinone metabolism; menaquinone biosynthesis. Catalyzes the thiamine diphosphate-dependent decarboxylation of 2-oxoglutarate and the subsequent addition of the resulting succinic semialdehyde-thiamine pyrophosphate anion to isochorismate to yield 2-succinyl-5-enolpyruvyl-6-hydroxy-3-cyclohexene-1-carboxylate (SEPHCHC). The protein is 2-succinyl-5-enolpyruvyl-6-hydroxy-3-cyclohexene-1-carboxylate synthase of Shewanella sp. (strain ANA-3).